The following is a 227-amino-acid chain: Phosphoglycolate phosphatase (227 aa).

Asp11 (nucleophile) is an active-site residue. Mg(2+)-binding residues include Asp11 and Asp13. Position 155 (Lys155) interacts with substrate. Mg(2+) is bound by residues Asp178 and Asp182.

Belongs to the archaeal SPP-like hydrolase family. Mg(2+) is required as a cofactor.

It catalyses the reaction 2-phosphoglycolate + H2O = glycolate + phosphate. Catalyzes the dephosphorylation of 2-phosphoglycolate. In Haloarcula marismortui (strain ATCC 43049 / DSM 3752 / JCM 8966 / VKM B-1809) (Halobacterium marismortui), this protein is Phosphoglycolate phosphatase.